Consider the following 320-residue polypeptide: MSTLTIDPTSIPPLEGKTAVVTATPLVPGGASGIGLAAAKIMLQKGATVYALDRQEPIEAVPGLKFRRCDVTSWSALREVFDEIQQVHLAFANAGICDKSPESYYDDVCDNGNLQEPDYSMIDVNLKAVLNFVKLARHSMRRHQVQGSIVITASSTGLVPEQSAPVYSSTKFAVIGLVRTLRSVLIQENITINAVAPFVTTTGMAPAEAMVPLKNLGVQTSPADFVGLALVYSAVARQTRRVEAYGKETEEDILEHGRWNGRVILTLGDKYTEVEEEFSKSRPLWTGGEVLQSIRLQQAVLDFRHGGVAIKSNRPSNQLN.

NADP(+) is bound by residues Ser-32, Ile-34, Gln-55, Asp-70, Asn-93, Lys-134, Tyr-167, Lys-171, and Thr-202. Tyr-167 acts as the Proton acceptor in catalysis. Residue Lys-171 is the Lowers pKa of active site Tyr of the active site.

The protein belongs to the short-chain dehydrogenases/reductases (SDR) family.

The protein operates within mycotoxin biosynthesis. Short-chain dehydrogenase/reductase; part of the core atranone cluster (CAC) which products are predicted to catalyze most or all steps of mycotoxin atranone synthesis, starting from geranylgeranyl pyrophosphate (GGPP). The initial cyclization of GGPP to dolabellane is probably performed by the terpene cyclase ATR13. The Baeyer-Villiger oxidation near the end of the atranone synthesis, which converts atranones D and E to atranones F and G is predicted to be catalyzed by the monooxygenase ATR8. Of the CAC's other predicted gene products, the reducing PKS ATR6 might synthesize a polyketide chain. This polyketide is probably transferred onto the atranone backbone by the polyketide transferase ATR5. Other predicted CAC products include 4 oxygenases (ATR2, ATR3, ATR4, and ATR14), 3 short-chain reductases (ATR7, ATR9, and ATR10), and a methyltransferase (ATR12). These may all be involved in the various steps of atranone biosynthesis, although their specific roles must await experimental determination. This Stachybotrys chlorohalonatus (strain IBT 40285) protein is Short-chain dehydrogenase/reductase ATR7.